The following is a 199-amino-acid chain: uncharacterized protein (199 aa).

The signal sequence occupies residues 1 to 28 (MKKLATVGSLIVTSTLVFSSMPFQNAHA).

It is found in the secreted. This is an uncharacterized protein from Staphylococcus aureus (strain NCTC 8325 / PS 47).